A 37-amino-acid chain; its full sequence is Cytochrome b6-f complex subunit 5 (37 aa).

Residues 5–25 traverse the membrane as a helical segment; sequence SLFGIVLGLIPITLAGLFVTA.

This sequence belongs to the PetG family. In terms of assembly, the 4 large subunits of the cytochrome b6-f complex are cytochrome b6, subunit IV (17 kDa polypeptide, PetD), cytochrome f and the Rieske protein, while the 4 small subunits are PetG, PetL, PetM and PetN. The complex functions as a dimer.

It is found in the plastid. The protein resides in the chloroplast thylakoid membrane. In terms of biological role, component of the cytochrome b6-f complex, which mediates electron transfer between photosystem II (PSII) and photosystem I (PSI), cyclic electron flow around PSI, and state transitions. PetG is required for either the stability or assembly of the cytochrome b6-f complex. This is Cytochrome b6-f complex subunit 5 from Arabis hirsuta (Hairy rock-cress).